A 728-amino-acid chain; its full sequence is Beta-galactosidase 12 (728 aa).

Positions 1 to 27 are cleaved as a signal peptide; that stretch reads MGLNFREKAWILLGILCCSSLICSVKA. Catalysis depends on E185, which acts as the Proton donor. E254 serves as the catalytic Nucleophile. Residues N255, N380, and N450 are each glycosylated (N-linked (GlcNAc...) asparagine).

This sequence belongs to the glycosyl hydrolase 35 family. Ubiquitous, with higher expression levels in roots and siliques.

It is found in the secreted. It localises to the extracellular space. Its subcellular location is the apoplast. The catalysed reaction is Hydrolysis of terminal non-reducing beta-D-galactose residues in beta-D-galactosides.. This chain is Beta-galactosidase 12 (BGAL12), found in Arabidopsis thaliana (Mouse-ear cress).